The sequence spans 646 residues: Stage V sporulation protein D (646 aa).

The Acyl-ester intermediate role is filled by Ser-294. Residues 580-638 form the PASTA domain; sequence DTKTIEVPNVVGMSVSDLESLLVNLNVDASGKGSKIVKQSPAAGTKVKEGSKIRVYLTE.

It belongs to the transpeptidase family.

The protein localises to the cell membrane. The enzyme catalyses Preferential cleavage: (Ac)2-L-Lys-D-Ala-|-D-Ala. Also transpeptidation of peptidyl-alanyl moieties that are N-acyl substituents of D-alanine.. It participates in cell wall biogenesis; peptidoglycan biosynthesis. In terms of biological role, penicillin-binding protein with an unknown catalytic activity. May have a specialized role in the morphogenesis of spore cortex, which is a modified form of peptidoglycan. Spore cortex formation is determined primarily by the mother cell. The polypeptide is Stage V sporulation protein D (spoVD) (Bacillus subtilis (strain 168)).